Consider the following 176-residue polypeptide: Ribosome rescue factor SmrB (176 aa).

A disordered region spans residues 29–51 (TIIQQPKKNTKQKEIKRSNREAS). A compositionally biased stretch (basic and acidic residues) spans 39 to 51 (KQKEIKRSNREAS). The Smr domain occupies 97-172 (LDMHGMTQQE…GDGALLVLLS (76 aa)).

This sequence belongs to the SmrB family. As to quaternary structure, associates with collided ribosomes, but not with correctly translating polysomes.

Functionally, acts as a ribosome collision sensor. Detects stalled/collided disomes (pairs of ribosomes where the leading ribosome is stalled and a second ribosome has collided with it) and endonucleolytically cleaves mRNA at the 5' boundary of the stalled ribosome. Stalled/collided disomes form a new interface (primarily via the 30S subunits) that binds SmrB. Cleaved mRNA becomes available for tmRNA ligation, leading to ribosomal subunit dissociation and rescue of stalled ribosomes. The protein is Ribosome rescue factor SmrB of Vibrio parahaemolyticus serotype O3:K6 (strain RIMD 2210633).